Reading from the N-terminus, the 681-residue chain is Dipeptidyl carboxypeptidase (681 aa).

Residue H470 participates in Zn(2+) binding. E471 is a catalytic residue. H474 and H477 together coordinate Zn(2+).

This sequence belongs to the peptidase M3 family. The cofactor is Zn(2+).

It is found in the cytoplasm. The enzyme catalyses Hydrolysis of unblocked, C-terminal dipeptides from oligopeptides, with broad specificity. Does not hydrolyze bonds in which P1' is Pro, or both P1 and P1' are Gly.. Its activity is regulated as follows. Stimulated by Mn(2+), Mg(2+), Co(2+) and Ca(2+), inhibited by Cu(2+), Ni(2+), Zn(2+), chymostatin and 1,10-phenanthroline. Its function is as follows. Removes dipeptides from the C-termini of N-blocked tripeptides, tetrapeptides and larger peptides. This is Dipeptidyl carboxypeptidase from Escherichia coli (strain K12).